The sequence spans 494 residues: DnaJ homolog subfamily C member 7 (494 aa).

N-acetylalanine is present on alanine 2. TPR repeat units follow at residues 28 to 61, 62 to 95, 96 to 129, 142 to 175, 210 to 243, 256 to 289, 294 to 327, and 328 to 361; these read AESFKEQGNAYYAKKDYNEAYNYYTKAIDMCPNN, ASYYGNRAATLMMLGRFREALGDAQQSVRLDDSF, VRGHLREGKCHLSLGNAMAACRSFQRALELDHKN, VMEYEKIAEVDFEKRDFRKVVFCMDRALEFAPAC, ADALYVRGLCLYYEDCIEKAVQFFVQALRMAPDH, LKAKKEDGNKAFKEGNYKLAYELYTEALGIDPNN, AKLYCNRGTVNSKLRQLEDAIEDCTNAVKLDDTY, and IKAYLRRAQCYMDTEQFEEAVRDYEKVYQTEKTK. The region spanning 381–451 is the J domain; that stretch reads DYYKILGVDK…KKKTRYDSGQ (71 aa). Residue serine 393 is modified to Phosphoserine.

Associates with complexes containing chaperones HSP70 and HSP90. Interacts with the GAP domain of NF1. Interacts with HSP90AA1. Interacts with HSPA1A/B; the interaction is enhanced by ATP. Interacts with HSP90AB1. Interacts with PGR. Interacts with RAD9A; the interaction is interrupted by UV and heat shock treatments. Interacts with HUS1 and RAD1. Interacts with NR1I3; this complex may also include HSP90 Interacts with HSPA8. Widely expressed with high levels in liver, skeletal muscle, kidney and testis.

Its subcellular location is the cytoplasm. It localises to the nucleus. The protein resides in the cytoskeleton. Its function is as follows. Acts as a co-chaperone regulating the molecular chaperones HSP70 and HSP90 in folding of steroid receptors, such as the glucocorticoid receptor and the progesterone receptor. Proposed to act as a recycling chaperone by facilitating the return of chaperone substrates to early stages of chaperoning if further folding is required. In vitro, induces ATP-independent dissociation of HSP90 but not of HSP70 from the chaperone-substrate complexes. Recruits NR1I3 to the cytoplasm. In Mus musculus (Mouse), this protein is DnaJ homolog subfamily C member 7 (Dnajc7).